The primary structure comprises 140 residues: Ribosome-binding factor A (140 aa).

Positions 1-13 (MQKKSSSKSHRAT) are enriched in basic residues. The segment at 1–22 (MQKKSSSKSHRATRGPSQRQLR) is disordered.

The protein belongs to the RbfA family. As to quaternary structure, monomer. Binds 30S ribosomal subunits, but not 50S ribosomal subunits or 70S ribosomes.

It is found in the cytoplasm. Its function is as follows. One of several proteins that assist in the late maturation steps of the functional core of the 30S ribosomal subunit. Associates with free 30S ribosomal subunits (but not with 30S subunits that are part of 70S ribosomes or polysomes). Required for efficient processing of 16S rRNA. May interact with the 5'-terminal helix region of 16S rRNA. This Parvibaculum lavamentivorans (strain DS-1 / DSM 13023 / NCIMB 13966) protein is Ribosome-binding factor A.